Here is a 470-residue protein sequence, read N- to C-terminus: 1-aminocyclopropane-1-carboxylate synthase 5 (470 aa).

The substrate site is built by Glu-47 and Tyr-85. Lys-272 bears the N6-(pyridoxal phosphate)lysine mark. Ser-461 is modified (phosphoserine).

The protein belongs to the class-I pyridoxal-phosphate-dependent aminotransferase family. As to quaternary structure, homodimer and heterodimer. In vivo, the relevance of heterodimerization with other ACS enzymes is however unsure. Interacts (via its C-terminal region) with FEI1, FEI2, ETO1, EOL1 and EOL2. Interacts with GRF3. Requires pyridoxal 5'-phosphate as cofactor. Post-translationally, may be processed at its C-terminus. In terms of processing, ubiquitinated. The interaction with ETO1 (and possibly EOL1 and EOL2) mediate its proteasome-dependent degradation. Its stability and degradation plays a central role in ethylene biosynthesis. As to expression, expressed in roots and siliques.

It catalyses the reaction S-adenosyl-L-methionine = 1-aminocyclopropane-1-carboxylate + S-methyl-5'-thioadenosine + H(+). It participates in alkene biosynthesis; ethylene biosynthesis via S-adenosyl-L-methionine; ethylene from S-adenosyl-L-methionine: step 1/2. Functionally, 1-aminocyclopropane-1-carboxylate synthase (ACS) enzymes catalyze the conversion of S-adenosyl-L-methionine (SAM) into 1-aminocyclopropane-1-carboxylate (ACC), a direct precursor of ethylene. This chain is 1-aminocyclopropane-1-carboxylate synthase 5 (ACS5), found in Arabidopsis thaliana (Mouse-ear cress).